We begin with the raw amino-acid sequence, 97 residues long: Co-chaperonin GroES (97 aa).

This sequence belongs to the GroES chaperonin family. As to quaternary structure, heptamer of 7 subunits arranged in a ring. Interacts with the chaperonin GroEL.

It is found in the cytoplasm. Together with the chaperonin GroEL, plays an essential role in assisting protein folding. The GroEL-GroES system forms a nano-cage that allows encapsulation of the non-native substrate proteins and provides a physical environment optimized to promote and accelerate protein folding. GroES binds to the apical surface of the GroEL ring, thereby capping the opening of the GroEL channel. In Serratia proteamaculans (strain 568), this protein is Co-chaperonin GroES.